Reading from the N-terminus, the 502-residue chain is Glucose-6-phosphate isomerase (502 aa).

The Proton donor role is filled by Glu-331. Active-site residues include His-362 and Lys-471.

This sequence belongs to the GPI family.

It is found in the cytoplasm. The enzyme catalyses alpha-D-glucose 6-phosphate = beta-D-fructose 6-phosphate. It participates in carbohydrate biosynthesis; gluconeogenesis. It functions in the pathway carbohydrate degradation; glycolysis; D-glyceraldehyde 3-phosphate and glycerone phosphate from D-glucose: step 2/4. Functionally, catalyzes the reversible isomerization of glucose-6-phosphate to fructose-6-phosphate. This is Glucose-6-phosphate isomerase from Xylella fastidiosa (strain M12).